Reading from the N-terminus, the 220-residue chain is UPF0758 protein APL_1970 (220 aa).

The MPN domain maps to 98–220 (NINEPYLAVM…YFSFEEEKFR (123 aa)). 3 residues coordinate Zn(2+): His169, His171, and Asp182. Residues 169-182 (HNHPSGNCTPSESD) carry the JAMM motif motif.

The protein belongs to the UPF0758 family.

This Actinobacillus pleuropneumoniae serotype 5b (strain L20) protein is UPF0758 protein APL_1970.